Reading from the N-terminus, the 298-residue chain is MLNTEKVKLGICPIGWTNDDMPDLGKENTFEQAVSEMALAGFKGTEVGNKYPKDVNVLKKALDLRNLQIASAWFSSFLTTKPYEETEKEFIAHRDFLHEMGAKVIVVSEQGHSIQGEMDTPICEGKYYFNEEEWKLLADGLNKLGRLAEDKGMKIVYHHHMGTGVQTTDEIDKLMSMTDESLVYLLFDTGHLVYSGENPIAILNKYANRIKHVHLKDIRADVLEKVKKEKMSFLMGVREGSFTVPGDGCIDFEPIFKILDENNYEGWILVEAEQDPAIANPFEYAMKARKYIKEKTGF.

Belongs to the IolE/MocC family. Glutathione serves as cofactor. It depends on Co(2+) as a cofactor. Mn(2+) is required as a cofactor.

The catalysed reaction is scyllo-inosose = 3D-3,5/4-trihydroxycyclohexane-1,2-dione + H2O. The protein operates within polyol metabolism; myo-inositol degradation into acetyl-CoA; acetyl-CoA from myo-inositol: step 2/7. Functionally, catalyzes the dehydration of inosose (2-keto-myo-inositol, 2KMI or 2,4,6/3,5-pentahydroxycyclohexanone) to 3D-(3,5/4)-trihydroxycyclohexane-1,2-dione (D-2,3-diketo-4-deoxy-epi-inositol). In Clostridium beijerinckii (strain ATCC 51743 / NCIMB 8052) (Clostridium acetobutylicum), this protein is Inosose dehydratase.